The chain runs to 114 residues: Pole-localizer protein TmaR (114 aa).

Positions 70-111 (RDDYESRVDDYTIRNAELSKQRREASTKMKEQKKAHAELLKN) form a coiled coil. The disordered stretch occupies residues 89 to 114 (KQRREASTKMKEQKKAHAELLKNAEK).

It belongs to the pole-localizer TmaR family.

The protein resides in the cytoplasm. Functionally, pole-localizer protein involved in the regulation of several cellular processes. The chain is Pole-localizer protein TmaR from Haemophilus influenzae (strain 86-028NP).